The sequence spans 355 residues: UDP-N-acetylglucosamine--N-acetylmuramyl-(pentapeptide) pyrophosphoryl-undecaprenol N-acetylglucosamine transferase (355 aa).

Residues 15 to 17 (TGG), asparagine 127, arginine 163, serine 191, isoleucine 244, 263 to 268 (ALTVSE), and glutamine 288 contribute to the UDP-N-acetyl-alpha-D-glucosamine site.

The protein belongs to the glycosyltransferase 28 family. MurG subfamily.

The protein resides in the cell inner membrane. The enzyme catalyses di-trans,octa-cis-undecaprenyl diphospho-N-acetyl-alpha-D-muramoyl-L-alanyl-D-glutamyl-meso-2,6-diaminopimeloyl-D-alanyl-D-alanine + UDP-N-acetyl-alpha-D-glucosamine = di-trans,octa-cis-undecaprenyl diphospho-[N-acetyl-alpha-D-glucosaminyl-(1-&gt;4)]-N-acetyl-alpha-D-muramoyl-L-alanyl-D-glutamyl-meso-2,6-diaminopimeloyl-D-alanyl-D-alanine + UDP + H(+). It participates in cell wall biogenesis; peptidoglycan biosynthesis. Its function is as follows. Cell wall formation. Catalyzes the transfer of a GlcNAc subunit on undecaprenyl-pyrophosphoryl-MurNAc-pentapeptide (lipid intermediate I) to form undecaprenyl-pyrophosphoryl-MurNAc-(pentapeptide)GlcNAc (lipid intermediate II). This Citrobacter koseri (strain ATCC BAA-895 / CDC 4225-83 / SGSC4696) protein is UDP-N-acetylglucosamine--N-acetylmuramyl-(pentapeptide) pyrophosphoryl-undecaprenol N-acetylglucosamine transferase.